A 752-amino-acid chain; its full sequence is Catalase-peroxidase 1 (752 aa).

The segment at 1–45 (MPPNTPDASDARPPQADTETHSHSESENPVIESPKPKAHAPLTNQ) is disordered. The tryptophyl-tyrosyl-methioninium (Trp-Tyr) (with M-270) cross-link spans 116–244 (WHAAGTYRIF…YGATTMGLIY (129 aa)). Histidine 117 (proton acceptor) is an active-site residue. The segment at residues 244–270 (YVNPEGPEGKPDPLAAAHDIRETFGRM) is a cross-link (tryptophyl-tyrosyl-methioninium (Tyr-Met) (with W-116)). A heme b-binding site is contributed by histidine 285.

Belongs to the peroxidase family. Peroxidase/catalase subfamily. Homodimer or homotetramer. Heme b is required as a cofactor. Post-translationally, formation of the three residue Trp-Tyr-Met cross-link is important for the catalase, but not the peroxidase activity of the enzyme.

It catalyses the reaction H2O2 + AH2 = A + 2 H2O. The catalysed reaction is 2 H2O2 = O2 + 2 H2O. In terms of biological role, bifunctional enzyme with both catalase and broad-spectrum peroxidase activity. May play a role in the intracellular survival of mycobacteria. The sequence is that of Catalase-peroxidase 1 from Mycolicibacterium fortuitum (Mycobacterium fortuitum).